We begin with the raw amino-acid sequence, 286 residues long: Release factor glutamine methyltransferase (286 aa).

S-adenosyl-L-methionine-binding positions include 120–124, D143, W172, and N187; that span reads GTGSG. Substrate is bound at residue 187–190; it reads NPPY.

Belongs to the protein N5-glutamine methyltransferase family. PrmC subfamily.

It catalyses the reaction L-glutaminyl-[peptide chain release factor] + S-adenosyl-L-methionine = N(5)-methyl-L-glutaminyl-[peptide chain release factor] + S-adenosyl-L-homocysteine + H(+). Methylates the class 1 translation termination release factors RF1/PrfA and RF2/PrfB on the glutamine residue of the universally conserved GGQ motif. This chain is Release factor glutamine methyltransferase, found in Gloeobacter violaceus (strain ATCC 29082 / PCC 7421).